The primary structure comprises 112 residues: Nucleoid-associated protein FTW_0607 (112 aa).

A disordered region spans residues 1–27 (MNFDMSKLMQQAQKMQEQMKKAQQERE). Residues 17-27 (EQMKKAQQERE) are compositionally biased toward basic and acidic residues.

It belongs to the YbaB/EbfC family. As to quaternary structure, homodimer.

The protein resides in the cytoplasm. It localises to the nucleoid. In terms of biological role, binds to DNA and alters its conformation. May be involved in regulation of gene expression, nucleoid organization and DNA protection. This chain is Nucleoid-associated protein FTW_0607, found in Francisella tularensis subsp. tularensis (strain WY96-3418).